Consider the following 457-residue polypeptide: Argininosuccinate lyase (457 aa).

It belongs to the lyase 1 family. Argininosuccinate lyase subfamily.

Its subcellular location is the cytoplasm. The catalysed reaction is 2-(N(omega)-L-arginino)succinate = fumarate + L-arginine. It participates in amino-acid biosynthesis; L-arginine biosynthesis; L-arginine from L-ornithine and carbamoyl phosphate: step 3/3. The sequence is that of Argininosuccinate lyase from Yersinia pseudotuberculosis serotype IB (strain PB1/+).